The following is a 591-amino-acid chain: Isocitrate dehydrogenase kinase/phosphatase (591 aa).

ATP-binding positions include 315-321 (APGVKGM) and lysine 336. The active site involves aspartate 371.

This sequence belongs to the AceK family.

It is found in the cytoplasm. It carries out the reaction L-seryl-[isocitrate dehydrogenase] + ATP = O-phospho-L-seryl-[isocitrate dehydrogenase] + ADP + H(+). Bifunctional enzyme which can phosphorylate or dephosphorylate isocitrate dehydrogenase (IDH) on a specific serine residue. This is a regulatory mechanism which enables bacteria to bypass the Krebs cycle via the glyoxylate shunt in response to the source of carbon. When bacteria are grown on glucose, IDH is fully active and unphosphorylated, but when grown on acetate or ethanol, the activity of IDH declines drastically concomitant with its phosphorylation. The protein is Isocitrate dehydrogenase kinase/phosphatase of Pectobacterium carotovorum subsp. carotovorum (strain PC1).